The chain runs to 388 residues: P2X purinoceptor 4 (388 aa).

The Cytoplasmic portion of the chain corresponds to 1–33 (MAGCCSVLGSFLFEYDTPRIVLIRSRKVGLMNR). A helical membrane pass occupies residues 34 to 54 (AVQLLILAYVIGWVFVWEKGY). At 55 to 338 (QETDSVVSSV…KFDIIPTMIN (284 aa)) the chain is on the extracellular side. ATP-binding residues include K67 and K69. Positions 67 and 69 each coordinate CTP. Residues N75 and N110 are each glycosylated (N-linked (GlcNAc...) asparagine). Intrachain disulfides connect C116/C165, C126/C149, and C132/C159. 2 N-linked (GlcNAc...) asparagine glycosylation sites follow: N153 and N184. ATP contacts are provided by T186 and L188. T186 is a CTP binding site. Residues N199 and N208 are each glycosylated (N-linked (GlcNAc...) asparagine). 2 disulfides stabilise this stretch: C217/C227 and C261/C270. Residues N293, R295, and K313 each coordinate ATP. N293, R295, and K313 together coordinate CTP. A helical membrane pass occupies residues 339–359 (VGSGLALLGVATVLCDVIVLY). At 360-388 (CMKKKYYYRDKKYKYVEDYEQGLSGEMNQ) the chain is on the cytoplasmic side.

It belongs to the P2X receptor family. Functional P2RXs are organized as homomeric and heteromeric trimers. Forms heterotrimer with P2RX1. Interacts with P2RX7 (via C-terminus); this interaction is functional only in the presence of ATP. Forms heterotrimer with P2RX4; functional differences between homomeric P2RX4 and P2RX4/6 heterotrimer are minor. Interacts with AP1M2. Widespread distribution in the brain. Strongly expressed in microglial cells. Also expressed in epithelial cells.

Its subcellular location is the cell membrane. It is found in the lysosome membrane. The enzyme catalyses K(+)(in) = K(+)(out). It carries out the reaction Na(+)(in) = Na(+)(out). The catalysed reaction is Ca(2+)(in) = Ca(2+)(out). Its activity is regulated as follows. Activated by ATP. pH-dependent and inhibited by acidic pH. Its function is as follows. ATP-gated nonselective transmembrane cation channel permeable to potassium, sodium and calcium. CTP, but not GTP or UTP, functions as a weak affinity agonist for P2RX4. Activated by extracellularly released ATP, it plays multiple role in immunity and central nervous system physiology. Plays a key role in initial steps of T-cell activation and Ca(2+) microdomain formation. Also participates in basal T-cell activity without TCR/CD3 stimulation. Promotes the differentiation and activation of Th17 cells via expression of retinoic acid-related orphan receptor C/RORC. Upon activation, drives microglia motility via the PI3K/Akt pathway. Could also function as an ATP-gated cation channel of lysosomal membranes. This Rattus norvegicus (Rat) protein is P2X purinoceptor 4 (P2rx4).